We begin with the raw amino-acid sequence, 483 residues long: Regulatory protein ViaA (483 aa).

The protein belongs to the ViaA family. As to quaternary structure, homodimer. Interacts with RavA.

The protein resides in the cytoplasm. Functionally, component of the RavA-ViaA chaperone complex, which may act on the membrane to optimize the function of some of the respiratory chains. ViaA stimulates the ATPase activity of RavA. The chain is Regulatory protein ViaA from Escherichia coli O139:H28 (strain E24377A / ETEC).